The primary structure comprises 123 residues: Fluoride-specific ion channel FluC 1 (123 aa).

A run of 3 helical transmembrane segments spans residues 33 to 53, 59 to 79, and 98 to 118; these read TFLI…LFGV, YGTM…TTFS, and VFYL…GAML. Na(+)-binding residues include Gly73 and Thr76.

It belongs to the fluoride channel Fluc/FEX (TC 1.A.43) family.

It localises to the cell inner membrane. It catalyses the reaction fluoride(in) = fluoride(out). Its activity is regulated as follows. Na(+) is not transported, but it plays an essential structural role and its presence is essential for fluoride channel function. Its function is as follows. Fluoride-specific ion channel. Important for reducing fluoride concentration in the cell, thus reducing its toxicity. The chain is Fluoride-specific ion channel FluC 1 from Brucella melitensis biotype 1 (strain ATCC 23456 / CCUG 17765 / NCTC 10094 / 16M).